A 148-amino-acid chain; its full sequence is Lysozyme-like protein 1 (148 aa).

The N-terminal stretch at M1–S19 is a signal peptide. In terms of domain architecture, C-type lysozyme spans K20 to S148. 4 disulfides stabilise this stretch: C25–C145, C49–C133, C83–C98, and C94–C112. E54 is an active-site residue. N58 is a glycosylation site (N-linked (GlcNAc...) asparagine). The active site involves D71.

Belongs to the glycosyl hydrolase 22 family. In terms of assembly, monomer.

Its subcellular location is the secreted. It catalyses the reaction Hydrolysis of (1-&gt;4)-beta-linkages between N-acetylmuramic acid and N-acetyl-D-glucosamine residues in a peptidoglycan and between N-acetyl-D-glucosamine residues in chitodextrins.. This chain is Lysozyme-like protein 1 (Lyzl1), found in Mus musculus (Mouse).